The following is a 192-amino-acid chain: A-type ATP synthase subunit E (192 aa).

It belongs to the V-ATPase E subunit family. Has multiple subunits with at least A(3), B(3), C, D, E, F, H, I and proteolipid K(x).

Its subcellular location is the cell membrane. Functionally, component of the A-type ATP synthase that produces ATP from ADP in the presence of a proton gradient across the membrane. This is A-type ATP synthase subunit E from Methanoculleus marisnigri (strain ATCC 35101 / DSM 1498 / JR1).